Reading from the N-terminus, the 334-residue chain is Anthranilate phosphoribosyltransferase (334 aa).

5-phospho-alpha-D-ribose 1-diphosphate-binding positions include G81, 84-85 (GD), T89, 91-94 (NIST), 109-117 (KHGSRSVSS), and A121. Residue G81 participates in anthranilate binding. S93 lines the Mg(2+) pocket. R167 serves as a coordination point for anthranilate. Mg(2+) is bound by residues D225 and E226.

The protein belongs to the anthranilate phosphoribosyltransferase family. Homodimer. The cofactor is Mg(2+).

It catalyses the reaction N-(5-phospho-beta-D-ribosyl)anthranilate + diphosphate = 5-phospho-alpha-D-ribose 1-diphosphate + anthranilate. The protein operates within amino-acid biosynthesis; L-tryptophan biosynthesis; L-tryptophan from chorismate: step 2/5. In terms of biological role, catalyzes the transfer of the phosphoribosyl group of 5-phosphorylribose-1-pyrophosphate (PRPP) to anthranilate to yield N-(5'-phosphoribosyl)-anthranilate (PRA). This chain is Anthranilate phosphoribosyltransferase, found in Actinobacillus pleuropneumoniae serotype 7 (strain AP76).